Consider the following 191-residue polypeptide: Syndecan-2-A (191 aa).

The signal sequence occupies residues 1–22 (MRNVWLIVPFALLAALSGETWA). Topologically, residues 23–137 (QADRDLYIDS…NLFHRTEVLA (115 aa)) are extracellular. A disordered region spans residues 32 to 60 (STESSGNYPVDDDDYSSGSGSGIPARGDD). O-linked (Xyl...) (glycosaminoglycan) serine glycans are attached at residues Ser-36, Ser-48, Ser-50, and Ser-52. A helical transmembrane segment spans residues 138–158 (AVIAGGGIGFLFAVFLILLLV). Over 159-191 (YRMRKKDEGSYDLGERKPSSAVYQKAPTKEFYA) the chain is Cytoplasmic. The tract at residues 168–191 (SYDLGERKPSSAVYQKAPTKEFYA) is disordered.

It belongs to the syndecan proteoglycan family. O-glycosylated; contains both heparan sulfate and chondroitin sulfate.

Its subcellular location is the membrane. Functionally, cell surface proteoglycan. The chain is Syndecan-2-A (sdc2-a) from Xenopus laevis (African clawed frog).